The following is a 391-amino-acid chain: Chorismate synthase (391 aa).

2 residues coordinate NADP(+): R39 and R45. FMN-binding positions include 133–135 (RAS), 254–255 (QA), G299, 314–318 (KPIAT), and R340.

It belongs to the chorismate synthase family. In terms of assembly, homotetramer. FMNH2 serves as cofactor.

It catalyses the reaction 5-O-(1-carboxyvinyl)-3-phosphoshikimate = chorismate + phosphate. It functions in the pathway metabolic intermediate biosynthesis; chorismate biosynthesis; chorismate from D-erythrose 4-phosphate and phosphoenolpyruvate: step 7/7. Functionally, catalyzes the anti-1,4-elimination of the C-3 phosphate and the C-6 proR hydrogen from 5-enolpyruvylshikimate-3-phosphate (EPSP) to yield chorismate, which is the branch point compound that serves as the starting substrate for the three terminal pathways of aromatic amino acid biosynthesis. This reaction introduces a second double bond into the aromatic ring system. This chain is Chorismate synthase, found in Symbiobacterium thermophilum (strain DSM 24528 / JCM 14929 / IAM 14863 / T).